The following is a 73-amino-acid chain: Small, acid-soluble spore protein C5 (73 aa).

This sequence belongs to the alpha/beta-type SASP family.

In terms of biological role, SASP are bound to spore DNA. They are double-stranded DNA-binding proteins that cause DNA to change to an a-like conformation. They protect the DNA backbone from chemical and enzymatic cleavage and are thus involved in dormant spore's high resistance to UV light. The protein is Small, acid-soluble spore protein C5 (SASP-C5) of Priestia megaterium (Bacillus megaterium).